Consider the following 246-residue polypeptide: 4-hydroxy-tetrahydrodipicolinate reductase (246 aa).

NAD(+) is bound at residue Gly-9–Met-14. An NADP(+)-binding site is contributed by Arg-36. NAD(+) is bound by residues Gly-78–Thr-80 and Ser-104–Met-107. The active-site Proton donor/acceptor is His-137. Residue His-138 coordinates (S)-2,3,4,5-tetrahydrodipicolinate. Lys-141 serves as the catalytic Proton donor. Position 147-148 (Gly-147–Thr-148) interacts with (S)-2,3,4,5-tetrahydrodipicolinate.

It belongs to the DapB family.

The protein resides in the cytoplasm. The catalysed reaction is (S)-2,3,4,5-tetrahydrodipicolinate + NAD(+) + H2O = (2S,4S)-4-hydroxy-2,3,4,5-tetrahydrodipicolinate + NADH + H(+). The enzyme catalyses (S)-2,3,4,5-tetrahydrodipicolinate + NADP(+) + H2O = (2S,4S)-4-hydroxy-2,3,4,5-tetrahydrodipicolinate + NADPH + H(+). It participates in amino-acid biosynthesis; L-lysine biosynthesis via DAP pathway; (S)-tetrahydrodipicolinate from L-aspartate: step 4/4. Its function is as follows. Catalyzes the conversion of 4-hydroxy-tetrahydrodipicolinate (HTPA) to tetrahydrodipicolinate. This chain is 4-hydroxy-tetrahydrodipicolinate reductase, found in Chlamydia muridarum (strain MoPn / Nigg).